We begin with the raw amino-acid sequence, 181 residues long: Peptidyl-prolyl cis-trans isomerase H (181 aa).

The region spanning 17–180 (FFDIALGGVP…QDVIITQCGE (164 aa)) is the PPIase cyclophilin-type domain.

The protein belongs to the cyclophilin-type PPIase family. PPIase H subfamily.

It localises to the nucleus. It carries out the reaction [protein]-peptidylproline (omega=180) = [protein]-peptidylproline (omega=0). In terms of biological role, PPIases accelerate the folding of proteins. It catalyzes the cis-trans isomerization of proline imidic peptide bonds in oligopeptides. The protein is Peptidyl-prolyl cis-trans isomerase H (cyp3) of Aspergillus fumigatus (strain ATCC MYA-4609 / CBS 101355 / FGSC A1100 / Af293) (Neosartorya fumigata).